A 63-amino-acid polypeptide reads, in one-letter code: Cytochrome c oxidase subunit 7C, mitochondrial (63 aa).

The N-terminal 16 residues, M1–R16, are a transit peptide targeting the mitochondrion. The Mitochondrial matrix segment spans residues S17–N33. Position 25 is an N6-acetyllysine; alternate (K25). K25 carries the post-translational modification N6-succinyllysine; alternate. Residues K34–L60 form a helical membrane-spanning segment. At L61–K63 the chain is on the mitochondrial intermembrane side.

This sequence belongs to the cytochrome c oxidase VIIc family. As to quaternary structure, component of the cytochrome c oxidase (complex IV, CIV), a multisubunit enzyme composed of 14 subunits. The complex is composed of a catalytic core of 3 subunits MT-CO1, MT-CO2 and MT-CO3, encoded in the mitochondrial DNA, and 11 supernumerary subunits COX4I1 (or COX4I2), COX5A, COX5B, COX6A2 (or COX6A1), COX6B1 (or COX6B2), COX6C, COX7A1 (or COX7A2), COX7B, COX7C, COX8B and NDUFA4, which are encoded in the nuclear genome. The complex exists as a monomer or a dimer and forms supercomplexes (SCs) in the inner mitochondrial membrane with NADH-ubiquinone oxidoreductase (complex I, CI) and ubiquinol-cytochrome c oxidoreductase (cytochrome b-c1 complex, complex III, CIII), resulting in different assemblies (supercomplex SCI(1)III(2)IV(1) and megacomplex MCI(2)III(2)IV(2)). Interacts with RAB5IF. In terms of tissue distribution, liver, heart, muscle and brain, contain the same isoform of COX VIIc, but at different concentrations.

Its subcellular location is the mitochondrion inner membrane. It functions in the pathway energy metabolism; oxidative phosphorylation. Component of the cytochrome c oxidase, the last enzyme in the mitochondrial electron transport chain which drives oxidative phosphorylation. The respiratory chain contains 3 multisubunit complexes succinate dehydrogenase (complex II, CII), ubiquinol-cytochrome c oxidoreductase (cytochrome b-c1 complex, complex III, CIII) and cytochrome c oxidase (complex IV, CIV), that cooperate to transfer electrons derived from NADH and succinate to molecular oxygen, creating an electrochemical gradient over the inner membrane that drives transmembrane transport and the ATP synthase. Cytochrome c oxidase is the component of the respiratory chain that catalyzes the reduction of oxygen to water. Electrons originating from reduced cytochrome c in the intermembrane space (IMS) are transferred via the dinuclear copper A center (CU(A)) of subunit 2 and heme A of subunit 1 to the active site in subunit 1, a binuclear center (BNC) formed by heme A3 and copper B (CU(B)). The BNC reduces molecular oxygen to 2 water molecules using 4 electrons from cytochrome c in the IMS and 4 protons from the mitochondrial matrix. The protein is Cytochrome c oxidase subunit 7C, mitochondrial (COX7C) of Bos taurus (Bovine).